The following is a 166-amino-acid chain: uncharacterized protein (166 aa).

The HTH asnC-type domain maps to 3-65 (LTEKETEILE…IDWRKVDGHE (63 aa)). The H-T-H motif DNA-binding region spans 22–41 (LETIAKMAGIPVNEVKTIID).

This is an uncharacterized protein from Bacillus subtilis (strain 168).